We begin with the raw amino-acid sequence, 210 residues long: Urease accessory protein UreE (210 aa).

The disordered stretch occupies residues 136–210 (PEGGAYAEPS…HGHSHAHDHK (75 aa)). 2 stretches are compositionally biased toward basic and acidic residues: residues 145 to 169 (SHAH…TSHD) and 178 to 196 (HDHD…EHCG). Over residues 197 to 210 (HDHHHGHSHAHDHK) the composition is skewed to basic residues.

Belongs to the UreE family.

Its subcellular location is the cytoplasm. Involved in urease metallocenter assembly. Binds nickel. Probably functions as a nickel donor during metallocenter assembly. This is Urease accessory protein UreE from Bradyrhizobium sp. (strain ORS 278).